The primary structure comprises 366 residues: NADH-quinone oxidoreductase subunit D (366 aa).

This sequence belongs to the complex I 49 kDa subunit family. In terms of assembly, NDH-1 is composed of 14 different subunits. Subunits NuoB, C, D, E, F, and G constitute the peripheral sector of the complex.

The protein resides in the cell membrane. The enzyme catalyses a quinone + NADH + 5 H(+)(in) = a quinol + NAD(+) + 4 H(+)(out). Its function is as follows. NDH-1 shuttles electrons from NADH, via FMN and iron-sulfur (Fe-S) centers, to quinones in the respiratory chain. The immediate electron acceptor for the enzyme in this species is believed to be a menaquinone. Couples the redox reaction to proton translocation (for every two electrons transferred, four hydrogen ions are translocated across the cytoplasmic membrane), and thus conserves the redox energy in a proton gradient. The chain is NADH-quinone oxidoreductase subunit D from Bacillus cytotoxicus (strain DSM 22905 / CIP 110041 / 391-98 / NVH 391-98).